The chain runs to 30 residues: Cyclotide hyen-K (30 aa).

The segment at residues 1 to 30 (GIPCGESCIFIPCITTVVGCSCSNKVCYDN) is a cross-link (cyclopeptide (Gly-Asn)). 3 disulfide bridges follow: Cys4–Cys20, Cys8–Cys22, and Cys13–Cys27.

This is a cyclic peptide. As to expression, detected in seeds (at protein level).

Probably participates in a plant defense mechanism. The chain is Cyclotide hyen-K from Pigea enneasperma (Spade flower).